Consider the following 130-residue polypeptide: MNAKIKAKTRSQMIDELSKMLNIEKKQTKAFMDTYEAFLILELSRAKEVRLGNIGKFKVSVRAERKGINPKTGETVIIPEKTIPKFTFTKGIKEIINAGISIDNERVSIDDNDFDDDDEFVEEYIVSENN.

This sequence belongs to the bacterial histone-like protein family.

Functionally, histone-like DNA-binding protein which is capable of wrapping DNA to stabilize it, and thus to prevent its denaturation under extreme environmental conditions. The polypeptide is DNA-binding protein HU (hup) (Ureaplasma parvum serovar 3 (strain ATCC 700970)).